Reading from the N-terminus, the 806-residue chain is Sperm head and tail associated protein (806 aa).

4 disordered regions span residues 1–36, 257–329, 428–496, and 707–806; these read MNSS…PSSC, TPAS…MSGS, LNNQ…CPQP, and SQIN…SKKK. Residues 13–27 show a composition bias toward polar residues; it reads APSTSPQADCPNNYS. Residues 277–290 show a composition bias toward low complexity; it reads PPLSSASSPPSGNP. The span at 320 to 329 shows a compositional bias: polar residues; the sequence is LSSQAGMSGS. The interaction with CRISP2 stretch occupies residues 521–806; the sequence is KEPPPETAVL…QIKSPHSKKK (286 aa). 2 stretches are compositionally biased toward low complexity: residues 710-723 and 733-754; these read NHQN…KNSS and RRGA…SSTQ. A compositionally biased stretch (polar residues) spans 773–788; it reads QSQSPADGKIESQSKS.

In terms of assembly, interacts with CRISP2. Isoforms 3 and 4 are expressed in testis (at protein level).

It localises to the cytoplasm. Functionally, plays a role during spermatogenesis. The polypeptide is Sperm head and tail associated protein (Nsun4) (Mus musculus (Mouse)).